The chain runs to 233 residues: LOB domain-containing protein 40 (233 aa).

The region spanning 3–109 (MSCNGCRVLR…VEAVMRGSPV (107 aa)) is the LOB domain. Residues 143 to 160 (KRRSRGACKEERNVRSLS) show a composition bias toward basic and acidic residues. Positions 143–183 (KRRSRGACKEERNVRSLSHESSLSHESPVSSEETTTEEPKT) are disordered. A compositionally biased stretch (low complexity) spans 161–175 (HESSLSHESPVSSEE).

This sequence belongs to the LOB domain-containing protein family. As to expression, expressed in roots and flowers.

This Arabidopsis thaliana (Mouse-ear cress) protein is LOB domain-containing protein 40 (LBD40).